An 81-amino-acid chain; its full sequence is Sulfur carrier protein TusA (81 aa).

The active-site Cysteine persulfide intermediate is Cys19.

It belongs to the sulfur carrier protein TusA family. In terms of assembly, interacts with IscS.

It localises to the cytoplasm. It functions in the pathway tRNA modification. In terms of biological role, sulfur carrier protein involved in sulfur trafficking in the cell. Part of a sulfur-relay system required for 2-thiolation during synthesis of 2-thiouridine of the modified wobble base 5-methylaminomethyl-2-thiouridine (mnm(5)s(2)U) in tRNA. Interacts with IscS and stimulates its cysteine desulfurase activity. Accepts an activated sulfur from IscS, which is then transferred to TusD, and thus determines the direction of sulfur flow from IscS to 2-thiouridine formation. Also appears to be involved in sulfur transfer for the biosynthesis of molybdopterin. This Escherichia coli O17:K52:H18 (strain UMN026 / ExPEC) protein is Sulfur carrier protein TusA.